We begin with the raw amino-acid sequence, 153 residues long: Putative pre-16S rRNA nuclease (153 aa).

The protein belongs to the YqgF nuclease family.

It is found in the cytoplasm. Functionally, could be a nuclease involved in processing of the 5'-end of pre-16S rRNA. The polypeptide is Putative pre-16S rRNA nuclease (Chloroflexus aurantiacus (strain ATCC 29366 / DSM 635 / J-10-fl)).